We begin with the raw amino-acid sequence, 306 residues long: [methyl-Co(III) glycine betaine-specific corrinoid protein]--tetrahydrofolate methyltransferase (306 aa).

The protein belongs to the MtrH family.

The enzyme catalyses methyl-Co(III)-[glycine betaine-specific corrinoid protein] + (6S)-5,6,7,8-tetrahydrofolate = Co(I)-[glycine betaine-specific corrinoid protein] + (6S)-5-methyl-5,6,7,8-tetrahydrofolate + H(+). Its function is as follows. Methyltransferase able to catalyze the transfer of a methyl group from methylcobalamin (methylCbl) to tetrahydrofolate (THF) in vitro, to generate methyl-THF and cob(I)alamin. In vivo, the methyl group probably comes from the adjacently encoded methylated corrinoid protein DSY3155. The methyl group may then be ultimately converted to carbon dioxide, and its oxidation would also provide reducing equivalents for anaerobic respiration. Thus, may function in the pathway that allows anaerobic methylotrophic growth of D.hafniense using glycine betaine. The sequence is that of [methyl-Co(III) glycine betaine-specific corrinoid protein]--tetrahydrofolate methyltransferase from Desulfitobacterium hafniense (strain Y51).